The chain runs to 344 residues: uncharacterized protein (344 aa).

NADP(+)-binding residues include lysine 38 and tyrosine 167.

It belongs to the NAD(P)-dependent epimerase/dehydratase family. Dihydroflavonol-4-reductase subfamily.

This is an uncharacterized protein from Saccharomyces cerevisiae (strain ATCC 204508 / S288c) (Baker's yeast).